The sequence spans 496 residues: Glycylpeptide N-tetradecanoyltransferase 1 (496 aa).

Residues 1–82 are disordered; the sequence is MADESETAVK…STQDQPVKMT (82 aa). Phosphoserine occurs at positions 31 and 47. Residues 55-66 are compositionally biased toward basic residues; that stretch reads KKKKKKQKKKKE. Residue serine 83 is modified to Phosphoserine. Glutamine 118, phenylalanine 119, tryptophan 120, phenylalanine 247, leucine 248, cysteine 249, valine 250, serine 256, arginine 258, valine 259, and alanine 260 together coordinate tetradecanoyl-CoA.

Belongs to the NMT family. As to expression, ubiquitous.

The protein resides in the cytoplasm. It is found in the cytosol. It localises to the membrane. The catalysed reaction is N-terminal glycyl-[protein] + tetradecanoyl-CoA = N-tetradecanoylglycyl-[protein] + CoA + H(+). It carries out the reaction N-terminal glycyl-L-lysyl-[protein] + tetradecanoyl-CoA = N-terminal glycyl-(N(6)-tetradecanoyl)-L-lysyl-[protein] + CoA + H(+). In terms of biological role, adds a myristoyl group to the N-terminal glycine residue of certain cellular and viral proteins. Also able to mediate N-terminal lysine myristoylation of proteins: catalyzes myristoylation of ARF6 on both 'Gly-2' and 'Lys-3'. Lysine myristoylation is required to maintain ARF6 on membranes during the GTPase cycle. Required for normal embryogenesis. The polypeptide is Glycylpeptide N-tetradecanoyltransferase 1 (Mus musculus (Mouse)).